A 291-amino-acid chain; its full sequence is ATP phosphoribosyltransferase (291 aa).

Belongs to the ATP phosphoribosyltransferase family. Long subfamily. Mg(2+) serves as cofactor.

Its subcellular location is the cytoplasm. The catalysed reaction is 1-(5-phospho-beta-D-ribosyl)-ATP + diphosphate = 5-phospho-alpha-D-ribose 1-diphosphate + ATP. It functions in the pathway amino-acid biosynthesis; L-histidine biosynthesis; L-histidine from 5-phospho-alpha-D-ribose 1-diphosphate: step 1/9. Feedback inhibited by histidine. Catalyzes the condensation of ATP and 5-phosphoribose 1-diphosphate to form N'-(5'-phosphoribosyl)-ATP (PR-ATP). Has a crucial role in the pathway because the rate of histidine biosynthesis seems to be controlled primarily by regulation of HisG enzymatic activity. This chain is ATP phosphoribosyltransferase, found in Geotalea uraniireducens (strain Rf4) (Geobacter uraniireducens).